The sequence spans 391 residues: Protein Wnt-2b (391 aa).

5 disulfides stabilise this stretch: cysteine 107/cysteine 118, cysteine 158/cysteine 166, cysteine 168/cysteine 188, cysteine 237/cysteine 251, and cysteine 239/cysteine 246. N-linked (GlcNAc...) asparagine glycosylation occurs at asparagine 117. Serine 243 is lipidated: O-palmitoleoyl serine; by PORCN. Asparagine 283 carries N-linked (GlcNAc...) asparagine glycosylation. Cystine bridges form between cysteine 309-cysteine 340, cysteine 325-cysteine 335, cysteine 339-cysteine 379, cysteine 355-cysteine 370, cysteine 357-cysteine 367, and cysteine 362-cysteine 363.

This sequence belongs to the Wnt family. As to quaternary structure, forms a soluble 1:1 complex with AFM; this prevents oligomerization and is required for prolonged biological activity. The complex with AFM may represent the physiological form in body fluids. Interacts with FZD4 and FZD5. Palmitoleoylation is required for efficient binding to frizzled receptors. Depalmitoleoylation leads to Wnt signaling pathway inhibition. As to expression, isoform 1 is expressed in adult heart, brain, placenta, lung, prostate, testis, ovary, small intestine and colon. In the adult brain, it is mainly found in the caudate nucleus, subthalamic nucleus and thalamus. Also detected in fetal brain, lung and kidney. Isoform 2 is expressed in fetal brain, fetal lung, fetal kidney, caudate nucleus, testis and cancer cell lines.

The protein resides in the secreted. It localises to the extracellular space. The protein localises to the extracellular matrix. In terms of biological role, ligand for members of the frizzled family of seven transmembrane receptors. Functions in the canonical Wnt/beta-catenin signaling pathway. Plays a redundant role in embryonic lung development. This is Protein Wnt-2b (WNT2B) from Homo sapiens (Human).